The following is a 1203-amino-acid chain: Partitioning defective 3 homolog B (1203 aa).

Disordered stretches follow at residues 79 to 104 and 138 to 162; these read FDEQEPLQKTESPGGNPADRQSPDAF and RRSSDPAPGPHADAQPSTASLSGQS. S100 bears the Phosphoserine mark. Residues 152–162 are compositionally biased toward polar residues; that stretch reads QPSTASLSGQS. Positions 201–289 constitute a PDZ 1 domain; the sequence is TRAVEISGEG…SPSVILHVLL (89 aa). Residues 334–374 form a disordered region; it reads TRASSPEGEEPASPQQSKSPRVPRLGRKPSSPSLSPLMGFG. Phosphoserine is present on residues S346, S352, and S368. PDZ domains follow at residues 383 to 468 and 496 to 585; these read KIDL…VIAR and TLEI…GMIQ. A phosphoserine mark is found at S635, S710, S728, S730, S746, S749, and S801. Positions 718–732 are enriched in basic and acidic residues; it reads GKVQSLADRRSDSPG. A disordered region spans residues 718–743; sequence GKVQSLADRRSDSPGKDFGPTLGLKK. Disordered stretches follow at residues 787–927, 968–994, and 1050–1203; these read KSYD…EKQA, VFRSPSPLRAGPLAYPRDGRPLSPDHL, and RPSD…TAAV. Position 810 is a phosphothreonine (T810). Positions 827–842 are enriched in basic and acidic residues; sequence VENKAKNIKKTKEKEK. The segment covering 843–854 has biased composition (basic residues); sequence KKGKGKLKVKEK. Basic and acidic residues-rich tracts occupy residues 855 to 865, 881 to 893, 906 to 927, and 984 to 994; these read KLKEEHEDAER, KKDDKVGKAEQKG, ERMKEERERIGAKHQELREKQA, and RDGRPLSPDHL. Phosphoserine occurs at positions 1088 and 1182.

It belongs to the PAR3 family. In terms of assembly, interacts with PARD6B. Interacts with INSC/inscuteable.

It localises to the endomembrane system. The protein resides in the cell junction. It is found in the tight junction. In terms of biological role, putative adapter protein involved in asymmetrical cell division and cell polarization processes. May play a role in the formation of epithelial tight junctions. This chain is Partitioning defective 3 homolog B (Pard3b), found in Mus musculus (Mouse).